Consider the following 95-residue polypeptide: Aspartyl/glutamyl-tRNA(Asn/Gln) amidotransferase subunit C (95 aa).

The protein belongs to the GatC family. As to quaternary structure, heterotrimer of A, B and C subunits.

The enzyme catalyses L-glutamyl-tRNA(Gln) + L-glutamine + ATP + H2O = L-glutaminyl-tRNA(Gln) + L-glutamate + ADP + phosphate + H(+). It carries out the reaction L-aspartyl-tRNA(Asn) + L-glutamine + ATP + H2O = L-asparaginyl-tRNA(Asn) + L-glutamate + ADP + phosphate + 2 H(+). Its function is as follows. Allows the formation of correctly charged Asn-tRNA(Asn) or Gln-tRNA(Gln) through the transamidation of misacylated Asp-tRNA(Asn) or Glu-tRNA(Gln) in organisms which lack either or both of asparaginyl-tRNA or glutaminyl-tRNA synthetases. The reaction takes place in the presence of glutamine and ATP through an activated phospho-Asp-tRNA(Asn) or phospho-Glu-tRNA(Gln). In Rhodospirillum centenum (strain ATCC 51521 / SW), this protein is Aspartyl/glutamyl-tRNA(Asn/Gln) amidotransferase subunit C.